A 44-amino-acid polypeptide reads, in one-letter code: Thioredoxin (44 aa).

The Thioredoxin domain occupies 2–44 (IELDKSNFEEEVLKAEGTVLVDFWSPSCEPCKALMPHVHDFEE). Residues cysteine 29 and cysteine 32 are joined by a disulfide bond.

It belongs to the thioredoxin family.

Functionally, participates in various redox reactions through the reversible oxidation of its active center dithiol to a disulfide and catalyzes dithiol-disulfide exchange reactions. This Tissierella creatinophila protein is Thioredoxin (trxA).